The primary structure comprises 173 residues: Cytochrome c-type biogenesis protein CcmE (173 aa).

Topologically, residues 1–7 (MTRKSRR) are cytoplasmic. Residues 8–28 (LILIAACGAVLALALGLILSA) traverse the membrane as a helical; Signal-anchor for type II membrane protein segment. Residues 29-173 (MSGSIVFFRS…DATLGQRSER (145 aa)) lie on the Periplasmic side of the membrane. Heme-binding residues include H122 and Y126. Residues 134–173 (ALKAQGRWQEGGGKDASKAAPKDAAKPETADATLGQRSER) are disordered. Residues 145 to 162 (GGKDASKAAPKDAAKPET) show a composition bias toward basic and acidic residues.

Belongs to the CcmE/CycJ family.

It localises to the cell inner membrane. Its function is as follows. Heme chaperone required for the biogenesis of c-type cytochromes. Transiently binds heme delivered by CcmC and transfers the heme to apo-cytochromes in a process facilitated by CcmF and CcmH. The polypeptide is Cytochrome c-type biogenesis protein CcmE (Methylorubrum extorquens (strain CM4 / NCIMB 13688) (Methylobacterium extorquens)).